Reading from the N-terminus, the 120-residue chain is NAD(P)H-quinone oxidoreductase subunit 3, chloroplastic (120 aa).

Helical transmembrane passes span Phe2–Ile22, Met64–Leu84, and Ile88–Leu108.

Belongs to the complex I subunit 3 family. NDH is composed of at least 16 different subunits, 5 of which are encoded in the nucleus.

The protein localises to the plastid. It localises to the chloroplast thylakoid membrane. The enzyme catalyses a plastoquinone + NADH + (n+1) H(+)(in) = a plastoquinol + NAD(+) + n H(+)(out). The catalysed reaction is a plastoquinone + NADPH + (n+1) H(+)(in) = a plastoquinol + NADP(+) + n H(+)(out). Functionally, NDH shuttles electrons from NAD(P)H:plastoquinone, via FMN and iron-sulfur (Fe-S) centers, to quinones in the photosynthetic chain and possibly in a chloroplast respiratory chain. The immediate electron acceptor for the enzyme in this species is believed to be plastoquinone. Couples the redox reaction to proton translocation, and thus conserves the redox energy in a proton gradient. This is NAD(P)H-quinone oxidoreductase subunit 3, chloroplastic from Oenothera argillicola (Appalachian evening primrose).